A 225-amino-acid polypeptide reads, in one-letter code: ATP-dependent dethiobiotin synthetase BioD (225 aa).

12-17 (EIGKTY) lines the ATP pocket. T16 contributes to the Mg(2+) binding site. K37 is an active-site residue. S41 provides a ligand contact to substrate. Residues D55, 122–125 (EGVG), and 182–183 (SE) each bind ATP. Positions 55 and 122 each coordinate Mg(2+).

It belongs to the dethiobiotin synthetase family. As to quaternary structure, homodimer. It depends on Mg(2+) as a cofactor.

The protein resides in the cytoplasm. The enzyme catalyses (7R,8S)-7,8-diammoniononanoate + CO2 + ATP = (4R,5S)-dethiobiotin + ADP + phosphate + 3 H(+). Its pathway is cofactor biosynthesis; biotin biosynthesis; biotin from 7,8-diaminononanoate: step 1/2. In terms of biological role, catalyzes a mechanistically unusual reaction, the ATP-dependent insertion of CO2 between the N7 and N8 nitrogen atoms of 7,8-diaminopelargonic acid (DAPA, also called 7,8-diammoniononanoate) to form a ureido ring. The polypeptide is ATP-dependent dethiobiotin synthetase BioD (Methylobacterium nodulans (strain LMG 21967 / CNCM I-2342 / ORS 2060)).